Reading from the N-terminus, the 155-residue chain is Protein archease-like (155 aa).

The Ca(2+) site is built by aspartate 26, aspartate 154, and isoleucine 155.

The protein belongs to the archease family.

Its function is as follows. Component of the tRNA-splicing ligase complex required to facilitate the enzymatic turnover of catalytic subunit RtcB. The chain is Protein archease-like from Caenorhabditis briggsae.